We begin with the raw amino-acid sequence, 342 residues long: Uroporphyrinogen decarboxylase (342 aa).

Residues 21 to 25 (RQAGR), aspartate 71, tyrosine 148, serine 203, and histidine 316 contribute to the substrate site.

The protein belongs to the uroporphyrinogen decarboxylase family. Homodimer.

It localises to the cytoplasm. The enzyme catalyses uroporphyrinogen III + 4 H(+) = coproporphyrinogen III + 4 CO2. It functions in the pathway porphyrin-containing compound metabolism; protoporphyrin-IX biosynthesis; coproporphyrinogen-III from 5-aminolevulinate: step 4/4. In terms of biological role, catalyzes the decarboxylation of four acetate groups of uroporphyrinogen-III to yield coproporphyrinogen-III. The sequence is that of Uroporphyrinogen decarboxylase from Campylobacter curvus (strain 525.92).